The following is a 349-amino-acid chain: Protein RecA (349 aa).

Position 65-72 (65-72 (GPESSGKT)) interacts with ATP. The disordered stretch occupies residues 329–349 (FDGDVDENENEDDSPKTLFDE). Positions 331-340 (GDVDENENED) are enriched in acidic residues.

This sequence belongs to the RecA family.

It localises to the cytoplasm. Functionally, can catalyze the hydrolysis of ATP in the presence of single-stranded DNA, the ATP-dependent uptake of single-stranded DNA by duplex DNA, and the ATP-dependent hybridization of homologous single-stranded DNAs. It interacts with LexA causing its activation and leading to its autocatalytic cleavage. The sequence is that of Protein RecA from Staphylococcus epidermidis (strain ATCC 35984 / DSM 28319 / BCRC 17069 / CCUG 31568 / BM 3577 / RP62A).